Reading from the N-terminus, the 240-residue chain is Ubiquinone biosynthesis O-methyltransferase (240 aa).

The S-adenosyl-L-methionine site is built by Arg-44, Gly-64, Asp-85, and Met-129.

The protein belongs to the methyltransferase superfamily. UbiG/COQ3 family.

It catalyses the reaction a 3-demethylubiquinol + S-adenosyl-L-methionine = a ubiquinol + S-adenosyl-L-homocysteine + H(+). The enzyme catalyses a 3-(all-trans-polyprenyl)benzene-1,2-diol + S-adenosyl-L-methionine = a 2-methoxy-6-(all-trans-polyprenyl)phenol + S-adenosyl-L-homocysteine + H(+). It functions in the pathway cofactor biosynthesis; ubiquinone biosynthesis. O-methyltransferase that catalyzes the 2 O-methylation steps in the ubiquinone biosynthetic pathway. The sequence is that of Ubiquinone biosynthesis O-methyltransferase from Escherichia coli (strain SMS-3-5 / SECEC).